The sequence spans 367 residues: Oleoyl-acyl carrier protein thioesterase 2, chloroplastic (367 aa).

The N-terminal 48 residues, Met1–Ser48, are a transit peptide targeting the chloroplast. Residues Asn263, His265, and Cys300 contribute to the active site.

Belongs to the acyl-ACP thioesterase family.

It is found in the plastid. The protein resides in the chloroplast. It carries out the reaction (9Z)-octadecenoyl-[ACP] + H2O = (9Z)-octadecenoate + holo-[ACP] + H(+). Plays an essential role in chain termination during de novo fatty acid synthesis. Possesses high thioesterase activity for oleoyl-ACP versus other acyl-ACPs. This chain is Oleoyl-acyl carrier protein thioesterase 2, chloroplastic (FATA2), found in Arabidopsis thaliana (Mouse-ear cress).